The primary structure comprises 263 residues: Post-GPI attachment to proteins factor 2 (263 aa).

Transmembrane regions (helical) follow at residues 16–36 (FVFC…LLSL), 69–89 (YIWR…AVAF), 109–129 (FLCN…LALT), 143–163 (CFGG…WLFS), 180–200 (YKIL…YLYW), and 208–228 (PGIY…NIFF).

Belongs to the PGAP2 family.

It localises to the golgi apparatus membrane. The protein resides in the endoplasmic reticulum membrane. In terms of biological role, involved in the lipid remodeling steps of GPI-anchor maturation. Required for stable expression of GPI-anchored proteins at the cell surface. This Caenorhabditis briggsae protein is Post-GPI attachment to proteins factor 2.